The following is a 358-amino-acid chain: UDP-N-acetylglucosamine--N-acetylmuramyl-(pentapeptide) pyrophosphoryl-undecaprenol N-acetylglucosamine transferase (358 aa).

Residues 11–13, asparagine 120, arginine 161, serine 188, and glutamine 282 contribute to the UDP-N-acetyl-alpha-D-glucosamine site; that span reads TGG.

It belongs to the glycosyltransferase 28 family. MurG subfamily.

It localises to the cell inner membrane. It catalyses the reaction di-trans,octa-cis-undecaprenyl diphospho-N-acetyl-alpha-D-muramoyl-L-alanyl-D-glutamyl-meso-2,6-diaminopimeloyl-D-alanyl-D-alanine + UDP-N-acetyl-alpha-D-glucosamine = di-trans,octa-cis-undecaprenyl diphospho-[N-acetyl-alpha-D-glucosaminyl-(1-&gt;4)]-N-acetyl-alpha-D-muramoyl-L-alanyl-D-glutamyl-meso-2,6-diaminopimeloyl-D-alanyl-D-alanine + UDP + H(+). It participates in cell wall biogenesis; peptidoglycan biosynthesis. Cell wall formation. Catalyzes the transfer of a GlcNAc subunit on undecaprenyl-pyrophosphoryl-MurNAc-pentapeptide (lipid intermediate I) to form undecaprenyl-pyrophosphoryl-MurNAc-(pentapeptide)GlcNAc (lipid intermediate II). The sequence is that of UDP-N-acetylglucosamine--N-acetylmuramyl-(pentapeptide) pyrophosphoryl-undecaprenol N-acetylglucosamine transferase from Synechococcus sp. (strain WH7803).